A 237-amino-acid polypeptide reads, in one-letter code: BTB/POZ domain-containing protein KCTD6 (237 aa).

The tract at residues 1–104 (MDNGDWGYMM…FYQIEPLIQC (104 aa)) is interaction with ANK1 isoform Mu7. Positions 10 to 110 (MSDPVTLNVG…LIQCLNDPRP (101 aa)) are interaction with CUL3. One can recognise a BTB domain in the interval 12–81 (DPVTLNVGGH…LRTSELTLPL (70 aa)). The interval 113–187 (PMDTFEEVVE…TFGPCDYHQE (75 aa)) is interaction with USP21.

As to quaternary structure, homopentamer. Interacts with KCTD11; KCTD6 and KCTD11 may associate in heteropentameric assemblies. Interacts (via BTB domain) with CUL3; initially a 4:4 stoichiometry has been reported, however, electron microscopy revealed pentameric states with a five-pointed pinwheel shape. The interaction with CUL3 is indicative for a participation in a BCR (BTB-CUL3-RBX1) E3 ubiquitin-protein ligase complex. Interacts with HDAC1; probably indirect as the interaction requires the presence of KCTD11. Interacts with USP21 (preferentially catalytic inactive form). Interacts with ANK1 isoform Mu7; detected in striated muscle. Interacts with USP11. In terms of tissue distribution, highly expressed in cerebellum and brain.

It localises to the cytoplasm. It is found in the myofibril. The protein localises to the sarcomere. Its subcellular location is the m line. It functions in the pathway protein modification; protein ubiquitination. Its function is as follows. Probable substrate-specific adapter of a BCR (BTB-CUL3-RBX1) E3 ubiquitin-protein ligase complex mediating the ubiquitination and subsequent proteasomal degradation of target proteins. Promotes the ubiquitination of HDAC1; the function seems to depend on KCTD11:KCTD6 oligomerization. Can function as antagonist of the Hedgehog pathway by affecting the nuclear transfer of transcription factor GLI1; the function probably occurs via HDAC1 down-regulation, keeping GLI1 acetylated and inactive. Inhibits cell growth and tumorigenicity of medulloblastoma (MDB). Involved in regulating protein levels of ANK1 isoform Mu7 probably implicating CUL3-dependent proteasomal degradation. The sequence is that of BTB/POZ domain-containing protein KCTD6 (Kctd6) from Mus musculus (Mouse).